A 295-amino-acid chain; its full sequence is Nitrogenase iron protein (295 aa).

An ATP-binding site is contributed by 11–18 (GKGGIGKS). Cysteine 99 lines the [4Fe-4S] cluster pocket. Arginine 102 carries the ADP-ribosylarginine; by dinitrogenase reductase ADP-ribosyltransferase modification. Residue cysteine 133 participates in [4Fe-4S] cluster binding.

The protein belongs to the NifH/BchL/ChlL family. Homodimer. The cofactor is [4Fe-4S] cluster. In terms of processing, the reversible ADP-ribosylation of Arg-102 inactivates the nitrogenase reductase and regulates nitrogenase activity.

The catalysed reaction is N2 + 8 reduced [2Fe-2S]-[ferredoxin] + 16 ATP + 16 H2O = H2 + 8 oxidized [2Fe-2S]-[ferredoxin] + 2 NH4(+) + 16 ADP + 16 phosphate + 6 H(+). In terms of biological role, the key enzymatic reactions in nitrogen fixation are catalyzed by the nitrogenase complex, which has 2 components: the iron protein and the molybdenum-iron protein. In Zymomonas mobilis subsp. mobilis (strain ATCC 31821 / ZM4 / CP4), this protein is Nitrogenase iron protein.